The following is a 425-amino-acid chain: Potassium/proton antiporter CemA (425 aa).

Residues 89–109 (LFLTTVKCLFILLFVPLGINF) traverse the membrane as a helical segment. The tract at residues 159–278 (LSENQIFFGL…KTDFASVFRT (120 aa)) is insert. The segment at 173–192 (STFPSSEKSQKSEHFSNQDE) is disordered. Residues 180 to 192 (KSQKSEHFSNQDE) are compositionally biased toward basic and acidic residues. 3 helical membrane-spanning segments follow: residues 300–320 (IEAI…CYLL), 350–370 (ILFI…ELFF), and 386–406 (IFLL…YLIF).

Belongs to the CemA family.

It localises to the plastid. The protein localises to the chloroplast inner membrane. It catalyses the reaction K(+)(in) + H(+)(out) = K(+)(out) + H(+)(in). Functionally, contributes to K(+)/H(+) antiport activity by supporting proton efflux to control proton extrusion and homeostasis in chloroplasts in a light-dependent manner to modulate photosynthesis. Prevents excessive induction of non-photochemical quenching (NPQ) under continuous-light conditions. Indirectly promotes efficient inorganic carbon uptake into chloroplasts. The sequence is that of Potassium/proton antiporter CemA from Tetradesmus obliquus (Green alga).